A 629-amino-acid chain; its full sequence is MSRLADRAKSYPLASFGAALLPPELGGPLPAQFVQRVDRYVTRLPATSRFAVRAGLASLAAASYLTTGRSLPRLHPDERARVLHRIAALSPEVAAAVEGLKAIVLLANGADTYAHELLARAQEHDAARPDAELTVILSADSPSVTRADAVVVGSGAGGAMVARTLARAGLDVVVLEEGRRWTVEEFRSTHPVDRYAGLYRGAGATVALGRPAVVLPMGRAVGGTTVVNSGTCFRPSLAVQRRWRDEFGLGLADPDQLGRRLDDAEQTLRVAPVPLEIMGRNGRLLLQAAKSLGWRAAPIPRNAPGCRGCCQCAIGCPSNAKFGVHLNALPQACAAGARIISWARVERILHRAGRAYGVRARRPDGTTLDVLADAVVVAAGATETPGLLRRSGLGGHPRLGHNLALHPATMLAGLFDDDVFAWRGVLQSAAVHEFHESDGVLIEATSTPPGMGSMVFPGYGAELLRWLDRAPQIATFGAMVADRGVGTVRSVRGETVVRYDIAPGEIAKLRVALQAIGRLLFAAGAVEVLTGIPGAPPMRSLPELQDVLRRANPRSLHLAAFHPTGTAAAGADEQLCPVDATGRLRGVEGVWVADASILPSCPEVNPQLSIMAMALAVADQTVAKVVGVR.

The active-site Proton acceptor is histidine 562.

It belongs to the GMC oxidoreductase family. It depends on FAD as a cofactor.

This is an uncharacterized protein from Mycobacterium tuberculosis (strain CDC 1551 / Oshkosh).